We begin with the raw amino-acid sequence, 586 residues long: Phosphomethylpyrimidine synthase (586 aa).

Residues 1–58 (MKQSVSAEQIELKSSLPGSKKVYVDGPREGMKVPMREIEQSDTNGVPNPPIRVYDTSG) are disordered. Residues 22–39 (VYVDGPREGMKVPMREIE) show a composition bias toward basic and acidic residues. Residues asparagine 193, methionine 222, tyrosine 251, histidine 287, 307-309 (SRG), 348-351 (DGLR), and glutamate 387 each bind substrate. Position 391 (histidine 391) interacts with Zn(2+). Residue tyrosine 414 coordinates substrate. Histidine 455 serves as a coordination point for Zn(2+). Residues cysteine 535, cysteine 538, and cysteine 543 each contribute to the [4Fe-4S] cluster site.

The protein belongs to the ThiC family. The cofactor is [4Fe-4S] cluster.

It carries out the reaction 5-amino-1-(5-phospho-beta-D-ribosyl)imidazole + S-adenosyl-L-methionine = 4-amino-2-methyl-5-(phosphooxymethyl)pyrimidine + CO + 5'-deoxyadenosine + formate + L-methionine + 3 H(+). Its pathway is cofactor biosynthesis; thiamine diphosphate biosynthesis. Catalyzes the synthesis of the hydroxymethylpyrimidine phosphate (HMP-P) moiety of thiamine from aminoimidazole ribotide (AIR) in a radical S-adenosyl-L-methionine (SAM)-dependent reaction. This chain is Phosphomethylpyrimidine synthase, found in Bacillus anthracis (strain A0248).